We begin with the raw amino-acid sequence, 102 residues long: Large ribosomal subunit protein bL21 (102 aa).

The protein belongs to the bacterial ribosomal protein bL21 family. Part of the 50S ribosomal subunit. Contacts protein L20.

Its function is as follows. This protein binds to 23S rRNA in the presence of protein L20. This is Large ribosomal subunit protein bL21 from Ehrlichia chaffeensis (strain ATCC CRL-10679 / Arkansas).